A 228-amino-acid chain; its full sequence is Geranylgeranylglyceryl phosphate synthase (228 aa).

Lys13 serves as a coordination point for sn-glycerol 1-phosphate. Mg(2+)-binding residues include Asp15 and Thr41. Sn-glycerol 1-phosphate contacts are provided by residues 159–164 (YIEYSG), Gly189, and 209–210 (GN).

Belongs to the GGGP/HepGP synthase family. Group I subfamily. The cofactor is Mg(2+).

The protein resides in the cytoplasm. It catalyses the reaction sn-glycerol 1-phosphate + (2E,6E,10E)-geranylgeranyl diphosphate = sn-3-O-(geranylgeranyl)glycerol 1-phosphate + diphosphate. The protein operates within membrane lipid metabolism; glycerophospholipid metabolism. Functionally, prenyltransferase that catalyzes the transfer of the geranylgeranyl moiety of geranylgeranyl diphosphate (GGPP) to the C3 hydroxyl of sn-glycerol-1-phosphate (G1P). This reaction is the first ether-bond-formation step in the biosynthesis of archaeal membrane lipids. This is Geranylgeranylglyceryl phosphate synthase from Methanospirillum hungatei JF-1 (strain ATCC 27890 / DSM 864 / NBRC 100397 / JF-1).